The following is a 182-amino-acid chain: ATP synthase subunit delta (182 aa).

It belongs to the ATPase delta chain family. F-type ATPases have 2 components, F(1) - the catalytic core - and F(0) - the membrane proton channel. F(1) has five subunits: alpha(3), beta(3), gamma(1), delta(1), epsilon(1). F(0) has three main subunits: a(1), b(2) and c(10-14). The alpha and beta chains form an alternating ring which encloses part of the gamma chain. F(1) is attached to F(0) by a central stalk formed by the gamma and epsilon chains, while a peripheral stalk is formed by the delta and b chains.

The protein localises to the cell inner membrane. Functionally, f(1)F(0) ATP synthase produces ATP from ADP in the presence of a proton or sodium gradient. F-type ATPases consist of two structural domains, F(1) containing the extramembraneous catalytic core and F(0) containing the membrane proton channel, linked together by a central stalk and a peripheral stalk. During catalysis, ATP synthesis in the catalytic domain of F(1) is coupled via a rotary mechanism of the central stalk subunits to proton translocation. Its function is as follows. This protein is part of the stalk that links CF(0) to CF(1). It either transmits conformational changes from CF(0) to CF(1) or is implicated in proton conduction. This is ATP synthase subunit delta from Cytophaga hutchinsonii (strain ATCC 33406 / DSM 1761 / CIP 103989 / NBRC 15051 / NCIMB 9469 / D465).